A 73-amino-acid polypeptide reads, in one-letter code: MNLLAIGAAIAALTGIGAGVGIGIATGKAVEAVSRQPEASGKIMQLLLLGGALAEATAIYGLLVAIMIIIFKP.

Transmembrane regions (helical) follow at residues 4–24 and 51–71; these read LAIGAAIAALTGIGAGVGIGI and GALAEATAIYGLLVAIMIIIF.

Belongs to the ATPase C chain family. F-type ATPases have 2 components, F(1) - the catalytic core - and F(0) - the membrane proton channel. F(1) has five subunits: alpha(3), beta(3), gamma(1), delta(1), epsilon(1). F(0) has three main subunits: a(1), b(2) and c(10-14). The alpha and beta chains form an alternating ring which encloses part of the gamma chain. F(1) is attached to F(0) by a central stalk formed by the gamma and epsilon chains, while a peripheral stalk is formed by the delta and b chains.

The protein resides in the cell membrane. Its function is as follows. F(1)F(0) ATP synthase produces ATP from ADP in the presence of a proton or sodium gradient. F-type ATPases consist of two structural domains, F(1) containing the extramembraneous catalytic core and F(0) containing the membrane proton channel, linked together by a central stalk and a peripheral stalk. During catalysis, ATP synthesis in the catalytic domain of F(1) is coupled via a rotary mechanism of the central stalk subunits to proton translocation. In terms of biological role, key component of the F(0) channel; it plays a direct role in translocation across the membrane. A homomeric c-ring of between 10-14 subunits forms the central stalk rotor element with the F(1) delta and epsilon subunits. In Caldanaerobacter subterraneus subsp. tengcongensis (strain DSM 15242 / JCM 11007 / NBRC 100824 / MB4) (Thermoanaerobacter tengcongensis), this protein is ATP synthase subunit c.